The sequence spans 368 residues: Protein HGH1 homolog (368 aa).

This sequence belongs to the HGH1 family.

This chain is Protein HGH1 homolog, found in Drosophila pseudoobscura pseudoobscura (Fruit fly).